Reading from the N-terminus, the 519-residue chain is ATP synthase subunit alpha (519 aa).

175 to 182 lines the ATP pocket; the sequence is GDRQTGKT.

This sequence belongs to the ATPase alpha/beta chains family. As to quaternary structure, F-type ATPases have 2 components, CF(1) - the catalytic core - and CF(0) - the membrane proton channel. CF(1) has five subunits: alpha(3), beta(3), gamma(1), delta(1), epsilon(1). CF(0) has three main subunits: a(1), b(2) and c(9-12). The alpha and beta chains form an alternating ring which encloses part of the gamma chain. CF(1) is attached to CF(0) by a central stalk formed by the gamma and epsilon chains, while a peripheral stalk is formed by the delta and b chains.

The protein localises to the cell inner membrane. The catalysed reaction is ATP + H2O + 4 H(+)(in) = ADP + phosphate + 5 H(+)(out). Produces ATP from ADP in the presence of a proton gradient across the membrane. The alpha chain is a regulatory subunit. The sequence is that of ATP synthase subunit alpha from Acinetobacter baylyi (strain ATCC 33305 / BD413 / ADP1).